The sequence spans 596 residues: Elongation factor 4 (596 aa).

The 183-residue stretch at 2 to 184 (KHIRNFSIIA…VIVAKIPPPE (183 aa)) folds into the tr-type G domain. GTP-binding positions include 14–19 (DHGKST) and 131–134 (NKID).

It belongs to the TRAFAC class translation factor GTPase superfamily. Classic translation factor GTPase family. LepA subfamily.

Its subcellular location is the cell inner membrane. The catalysed reaction is GTP + H2O = GDP + phosphate + H(+). Functionally, required for accurate and efficient protein synthesis under certain stress conditions. May act as a fidelity factor of the translation reaction, by catalyzing a one-codon backward translocation of tRNAs on improperly translocated ribosomes. Back-translocation proceeds from a post-translocation (POST) complex to a pre-translocation (PRE) complex, thus giving elongation factor G a second chance to translocate the tRNAs correctly. Binds to ribosomes in a GTP-dependent manner. This Shewanella putrefaciens (strain CN-32 / ATCC BAA-453) protein is Elongation factor 4.